A 366-amino-acid polypeptide reads, in one-letter code: MSGNTFGTLFTVTTFGESHGPAIGCVIDGCPPGMVLSEADIQFDLDRRKPGTSRHVTQRQESDTVEILSGVFEGKTTGTPIALLIRNEDQRSKDYGNITETFRPGHADYTYWHKYGIRDPRGGGRSSARLTAPVVGAAAIAKKWLLEQYGTTFKGCMSQLGEIAIPFESWEHVPNNPFFSANASILPQLEAYMDDLRKNGDSCGARIDVVAENVPIGLGEPIYDKLDAEIAYALMGINAVKGVEIGAGFKSVAQKGTEHGDELTPDGFASNNAGGVLGGISTGQNITASMAIKPTSSIRTARHSIDKDGHPIMVETFGRHDPCVGIRATPIAEAMLALVLMDHALRHRAQCGDVKVSPPPIPASSR.

Arginine 48 and arginine 54 together coordinate NADP(+). Residues 125-127, 238-239, glycine 278, 293-297, and arginine 319 each bind FMN; these read RSS, NA, and KPTSS.

It belongs to the chorismate synthase family. Homotetramer. FMNH2 serves as cofactor.

It carries out the reaction 5-O-(1-carboxyvinyl)-3-phosphoshikimate = chorismate + phosphate. Its pathway is metabolic intermediate biosynthesis; chorismate biosynthesis; chorismate from D-erythrose 4-phosphate and phosphoenolpyruvate: step 7/7. Catalyzes the anti-1,4-elimination of the C-3 phosphate and the C-6 proR hydrogen from 5-enolpyruvylshikimate-3-phosphate (EPSP) to yield chorismate, which is the branch point compound that serves as the starting substrate for the three terminal pathways of aromatic amino acid biosynthesis. This reaction introduces a second double bond into the aromatic ring system. This is Chorismate synthase from Herminiimonas arsenicoxydans.